A 159-amino-acid chain; its full sequence is Large ribosomal subunit protein uL22 (159 aa).

Belongs to the universal ribosomal protein uL22 family. In terms of assembly, part of the 50S ribosomal subunit.

In terms of biological role, this protein binds specifically to 23S rRNA; its binding is stimulated by other ribosomal proteins, e.g. L4, L17, and L20. It is important during the early stages of 50S assembly. It makes multiple contacts with different domains of the 23S rRNA in the assembled 50S subunit and ribosome. Its function is as follows. The globular domain of the protein is located near the polypeptide exit tunnel on the outside of the subunit, while an extended beta-hairpin is found that lines the wall of the exit tunnel in the center of the 70S ribosome. This is Large ribosomal subunit protein uL22 from Thermotoga sp. (strain RQ2).